The following is a 392-amino-acid chain: Tyrosine--tRNA ligase (392 aa).

A 'HIGH' region motif is present at residues Pro-39–His-48. A 'KMSKS' region motif is present at residues Lys-223–Ser-227. Lys-226 lines the ATP pocket. Positions Ile-331–Leu-391 constitute an S4 RNA-binding domain.

The protein belongs to the class-I aminoacyl-tRNA synthetase family. TyrS type 2 subfamily. In terms of assembly, homodimer.

It localises to the cytoplasm. It catalyses the reaction tRNA(Tyr) + L-tyrosine + ATP = L-tyrosyl-tRNA(Tyr) + AMP + diphosphate + H(+). Its function is as follows. Catalyzes the attachment of tyrosine to tRNA(Tyr) in a two-step reaction: tyrosine is first activated by ATP to form Tyr-AMP and then transferred to the acceptor end of tRNA(Tyr). The sequence is that of Tyrosine--tRNA ligase from Ralstonia nicotianae (strain ATCC BAA-1114 / GMI1000) (Ralstonia solanacearum).